The primary structure comprises 612 residues: Serine/threonine-protein kinase Nek1 (612 aa).

Positions 4-258 (YEFLEQIGKG…ASDLLRHPHL (255 aa)) constitute a Protein kinase domain. Residues 10-18 (IGKGSFGSA) and K33 each bind ATP. D129 acts as the Proton acceptor in catalysis. Over residues 503 to 513 (ISDGSSSSDQN) the composition is skewed to polar residues. Residues 503-534 (ISDGSSSSDQNATAGASSHTTSSSSRRCRFDP) form a disordered region. A compositionally biased stretch (low complexity) spans 514-527 (ATAGASSHTTSSSS).

The protein belongs to the protein kinase superfamily. NEK Ser/Thr protein kinase family. NIMA subfamily.

It carries out the reaction L-seryl-[protein] + ATP = O-phospho-L-seryl-[protein] + ADP + H(+). The catalysed reaction is L-threonyl-[protein] + ATP = O-phospho-L-threonyl-[protein] + ADP + H(+). Functionally, may be involved in plant development processes. This chain is Serine/threonine-protein kinase Nek1 (NEK1), found in Arabidopsis thaliana (Mouse-ear cress).